The chain runs to 751 residues: Photosystem I P700 chlorophyll a apoprotein A1 (751 aa).

The next 8 membrane-spanning stretches (helical) occupy residues 73-96, 159-182, 198-222, 294-312, 349-372, 388-414, 436-458, and 533-551; these read VFSA…FHGA, LYIT…FHYH, LNHH…HVSL, VAHH…GHMY, WHAQ…QHMY, LSLF…IFMV, AIIS…LYIH, and FLVH…LILL. [4Fe-4S] cluster contacts are provided by C575 and C584. Helical transmembrane passes span 591 to 612 and 665 to 687; these read HVFL…HFSW and LSAY…MFLF. H676 provides a ligand contact to chlorophyll a'. Residues M684 and Y692 each coordinate chlorophyll a. W693 serves as a coordination point for phylloquinone. The chain crosses the membrane as a helical span at residues 725 to 745; the sequence is AVGVAHYLLGGIATTWSFFLA.

Belongs to the PsaA/PsaB family. As to quaternary structure, the PsaA/B heterodimer binds the P700 chlorophyll special pair and subsequent electron acceptors. PSI consists of a core antenna complex that captures photons, and an electron transfer chain that converts photonic excitation into a charge separation. The eukaryotic PSI reaction center is composed of at least 11 subunits. P700 is a chlorophyll a/chlorophyll a' dimer, A0 is one or more chlorophyll a, A1 is one or both phylloquinones and FX is a shared 4Fe-4S iron-sulfur center. is required as a cofactor.

It localises to the plastid. It is found in the chloroplast thylakoid membrane. It carries out the reaction reduced [plastocyanin] + hnu + oxidized [2Fe-2S]-[ferredoxin] = oxidized [plastocyanin] + reduced [2Fe-2S]-[ferredoxin]. Its function is as follows. PsaA and PsaB bind P700, the primary electron donor of photosystem I (PSI), as well as the electron acceptors A0, A1 and FX. PSI is a plastocyanin/cytochrome c6-ferredoxin oxidoreductase, converting photonic excitation into a charge separation, which transfers an electron from the donor P700 chlorophyll pair to the spectroscopically characterized acceptors A0, A1, FX, FA and FB in turn. Oxidized P700 is reduced on the lumenal side of the thylakoid membrane by plastocyanin or cytochrome c6. The polypeptide is Photosystem I P700 chlorophyll a apoprotein A1 (Euglena gracilis).